Here is a 202-residue protein sequence, read N- to C-terminus: Polyamine-modulated factor 1 (202 aa).

Over residues 1 to 15 (MAEVSRDSEAAERGP) the composition is skewed to basic and acidic residues. The segment at 1 to 26 (MAEVSRDSEAAERGPEGSSPEAVPGD) is disordered. The stretch at 153-194 (EAKNQELADAVLAGRRQVEELQQQVRALQQTWQALHREQREL) forms a coiled coil.

In terms of assembly, component of the MIS12 complex composed of MIS12, DSN1, NSL1 and PMF1. Interacts with COPS7A. Interacts via its coiled-coil domain with the leucine-zipper domain of NFE2L2. The interaction with NFE2L2 is required for the transcriptional regulation of SSAT.

It localises to the nucleus. It is found in the chromosome. The protein localises to the centromere. Its subcellular location is the kinetochore. In terms of biological role, part of the MIS12 complex which is required for normal chromosome alignment and segregation and for kinetochore formation during mitosis. May act as a cotranscription partner of NFE2L2 involved in regulation of polyamine-induced transcription of SSAT. This Mus musculus (Mouse) protein is Polyamine-modulated factor 1.